The primary structure comprises 520 residues: GMP synthase [glutamine-hydrolyzing] (520 aa).

In terms of domain architecture, Glutamine amidotransferase type-1 spans 12 to 202; that stretch reads KIIVLDFGSQ…AFDVCGCTGD (191 aa). Catalysis depends on Cys89, which acts as the Nucleophile. Residues His176 and Glu178 contribute to the active site. A GMPS ATP-PPase domain is found at 203–395; that stretch reads WSMENFIDME…LGMPDAIVWR (193 aa). An ATP-binding site is contributed by 230–236; it reads SGGVDSS.

Homodimer.

It carries out the reaction XMP + L-glutamine + ATP + H2O = GMP + L-glutamate + AMP + diphosphate + 2 H(+). The protein operates within purine metabolism; GMP biosynthesis; GMP from XMP (L-Gln route): step 1/1. Functionally, catalyzes the synthesis of GMP from XMP. This is GMP synthase [glutamine-hydrolyzing] from Enterococcus faecalis (strain ATCC 700802 / V583).